Reading from the N-terminus, the 197-residue chain is Adenylate kinase (197 aa).

16-21 (GAGKGT) contacts ATP. The NMP stretch occupies residues 36-65 (STGDILRDHVARGTALGQRVKPILDAGQLV). Residues threonine 37, arginine 42, 63–65 (QLV), 90–93 (GFPR), and glutamine 97 each bind AMP. The segment at 131 to 147 (ERGRQAALRGEPVRSDD) is LID. ATP is bound at residue arginine 132. AMP-binding residues include arginine 144 and arginine 155. Glycine 183 contributes to the ATP binding site.

It belongs to the adenylate kinase family. As to quaternary structure, monomer.

It is found in the cytoplasm. The enzyme catalyses AMP + ATP = 2 ADP. It participates in purine metabolism; AMP biosynthesis via salvage pathway; AMP from ADP: step 1/1. Its function is as follows. Catalyzes the reversible transfer of the terminal phosphate group between ATP and AMP. Plays an important role in cellular energy homeostasis and in adenine nucleotide metabolism. This is Adenylate kinase from Deinococcus geothermalis (strain DSM 11300 / CIP 105573 / AG-3a).